The following is a 557-amino-acid chain: Probable WRKY transcription factor 20 (557 aa).

Basic and acidic residues predominate over residues 1–12 (MNPQANDRKEFQ). Disordered stretches follow at residues 1–36 (MNPQANDRKEFQGDCSATGDLTAKHDSAGGNGGGGA) and 76–215 (KPEP…DGYN). Positions 95 to 114 (SASSSSYTGRGFHQNTFTEQ) are enriched in polar residues. Positions 151-169 (SSHSPSSISDAAGSSSELS) are enriched in low complexity. A compositionally biased stretch (polar residues) spans 193 to 207 (SIQTSQNDSRGSTPS). The segment at residues 205 to 269 (TPSILADDGY…YKGTHDHPKP (65 aa)) is a DNA-binding region (WRKY 1). Zn(2+) contacts are provided by cysteine 236, cysteine 241, histidine 264, and histidine 266. The segment at 257 to 348 (DIIYKGTHDH…PDDDDPFSKR (92 aa)) is disordered. Positions 282–299 (QEERLDKYPSSTGRDEKG) are enriched in basic and acidic residues. Residues 303–314 (YNLSNPNEQTGN) show a composition bias toward polar residues. Over residues 321 to 332 (SASDDGGEAAAS) the composition is skewed to low complexity. The segment at residues 375–440 (SEVDILDDGY…YEGKHDHDVP (66 aa)) is a DNA-binding region (WRKY 2). Cysteine 406, cysteine 411, histidine 435, and histidine 437 together coordinate Zn(2+). Disordered stretches follow at residues 433–486 (GKHD…QHQN) and 520–557 (NQYGQRETKNETQNGDISSLNNSSYPYPPNMGRVQSGP). Polar residues predominate over residues 520 to 536 (NQYGQRETKNETQNGDI).

Belongs to the WRKY group I family.

It is found in the nucleus. Its function is as follows. Transcription factor. Interacts specifically with the W box (5'-(T)TGAC[CT]-3'), a frequently occurring elicitor-responsive cis-acting element. In Arabidopsis thaliana (Mouse-ear cress), this protein is Probable WRKY transcription factor 20 (WRKY20).